Here is a 439-residue protein sequence, read N- to C-terminus: Secreted aspartic protease FUS4 (439 aa).

The first 22 residues, 1–22, serve as a signal peptide directing secretion; it reads MLTIATLHVALQVFGAFSPSHA. The region spanning 49–434 is the Peptidase A1 domain; the sequence is YLFNVTVGSP…NFEDRSFGLA (386 aa). Residues asparagine 52 and asparagine 61 are each glycosylated (N-linked (GlcNAc...) asparagine). Aspartate 67 is an active-site residue. Residues asparagine 101, asparagine 107, and asparagine 123 are each glycosylated (N-linked (GlcNAc...) asparagine). Aspartate 296 is a catalytic residue. Cysteines 352 and 390 form a disulfide.

This sequence belongs to the peptidase A1 family.

It localises to the secreted. Functionally, secreted aspartic protease; part of the gene cluster that mediates the biosynthesis of the mycotoxin fusarin C. Within the cluster, FUS1, FUS2, FUS8 and FUS9 are sufficient for fusarin production. The other FUS cluster members are not essential for fusarin C biosynthesis. The polypeptide is Secreted aspartic protease FUS4 (Gibberella moniliformis (strain M3125 / FGSC 7600) (Maize ear and stalk rot fungus)).